Here is a 319-residue protein sequence, read N- to C-terminus: Bidirectional sugar transporter SWEET15 (319 aa).

Over 1–10 (MAFMSMERST) the chain is Extracellular. The helical transmembrane segment at 11-31 (WAFTFGILGNLISLMVFLSPL) threads the bilayer. Residues 13–99 (FTFGILGNLI…AMYLAYAPKS (87 aa)) enclose the MtN3/slv 1 domain. Over 32–50 (PTFYRVYRKKSTEGFQSTP) the chain is Cytoplasmic. The chain crosses the membrane as a helical span at residues 51-71 (YVVTLFSCMLWMYYAFVKSGA). A topological domain (extracellular) is located at residue glutamate 72. The helical transmembrane segment at 73 to 93 (LLVTINGVGCVIETVYLAMYL) threads the bilayer. Residues 94–106 (AYAPKSARMLTAK) are Cytoplasmic-facing. Residues 107–127 (MLLGLNIGLFGVIALVTLLLS) form a helical membrane-spanning segment. Over 128–134 (RGELRVH) the chain is Extracellular. The helical transmembrane segment at 135–155 (VLGWICVAVSLSVFAAPLSII) threads the bilayer. Positions 135–219 (VLGWICVAVS…ALYMAYRSKK (85 aa)) constitute a MtN3/slv 2 domain. Residues 156-167 (RLVIRTKSVEFM) are Cytoplasmic-facing. The chain crosses the membrane as a helical span at residues 168–188 (PFSLSFFLVLSAVIWFLYGLL). At 189-191 (KKD) the chain is on the extracellular side. Residues 192–212 (VFVALPNVLGFVFGVAQMALY) form a helical membrane-spanning segment. At 213 to 319 (MAYRSKKPLV…KPDMAIVVEV (107 aa)) the chain is on the cytoplasmic side.

It belongs to the SWEET sugar transporter family. Forms homooligomers and/or heterooligomers.

The protein localises to the cell membrane. Functionally, mediates both low-affinity uptake and efflux of sugar across the plasma membrane. Its function is as follows. Confers blight susceptibility. Confers TAL effector-mediated susceptibility to Xanthomonas oryzae pv. oryzae. This is Bidirectional sugar transporter SWEET15 (SWEET15) from Oryza sativa subsp. japonica (Rice).